A 118-amino-acid chain; its full sequence is MSEQPHKQRTRTKRASLHEKQDQVRATLSEELREEYGQRNVRVNVGDTVEVMRGDDAGEDGEVTDVDLRDAEVFVEGVTVEAADGEETPRPVESSNLRVTDLDLDDDMRVERLEGDNE.

The tract at residues Met-1 to Val-24 is disordered.

This sequence belongs to the universal ribosomal protein uL24 family. In terms of assembly, part of the 50S ribosomal subunit.

In terms of biological role, one of two assembly initiator proteins, it binds directly to the 5'-end of the 23S rRNA, where it nucleates assembly of the 50S subunit. Located at the polypeptide exit tunnel on the outside of the subunit. This is Large ribosomal subunit protein uL24 from Halobacterium salinarum (strain ATCC 700922 / JCM 11081 / NRC-1) (Halobacterium halobium).